The sequence spans 500 residues: Putative glucokinase-2 (500 aa).

Ser-2 is modified (N-acetylserine). Phosphoserine is present on Ser-2. Residues 12–498 enclose the Hexokinase domain; it reads EALEDAVVEI…SGVGAALCAL (487 aa). Residues 74–217 form a hexokinase small subdomain region; it reads NGTERGVLLA…LSMINVVALT (144 aa). Residue Lys-110 participates in ATP binding. The glucose-binding stretch occupies residues 159-185; the sequence is KMGFTFSYPVDQTSLSSGTLIRWTKSF. The tract at residues 218–487 is hexokinase large subdomain; the sequence is NDTVGTFLSH…RKIHLRLAKD (270 aa). The residue at position 470 (Ser-470) is a Phosphoserine. 487 to 492 provides a ligand contact to ATP; it reads DGSGVG.

This sequence belongs to the hexokinase family.

It is found in the cytoplasm. It catalyses the reaction D-glucose + ATP = D-glucose 6-phosphate + ADP + H(+). It functions in the pathway carbohydrate degradation; glycolysis; D-glyceraldehyde 3-phosphate and glycerone phosphate from D-glucose: step 1/4. Its function is as follows. Putative glucokinase involved in phosphorylation of aldohexoses and glucose uptake. Involved in sporulation. Required for the full activation of the early meiotic inducer IME1. This Saccharomyces cerevisiae (strain ATCC 204508 / S288c) (Baker's yeast) protein is Putative glucokinase-2 (EMI2).